Here is a 239-residue protein sequence, read N- to C-terminus: Flagellar L-ring protein (239 aa).

An N-terminal signal peptide occupies residues 1–16 (MKPVILATASALLLAA). C17 carries the N-palmitoyl cysteine lipid modification. C17 is lipidated: S-diacylglycerol cysteine. Positions 120–138 (SGSTSGSASGNLGLTGDTS) are enriched in polar residues. The disordered stretch occupies residues 120 to 145 (SGSTSGSASGNLGLTGDTSTDGKGKI).

It belongs to the FlgH family. As to quaternary structure, the basal body constitutes a major portion of the flagellar organelle and consists of four rings (L,P,S, and M) mounted on a central rod.

It is found in the cell outer membrane. Its subcellular location is the bacterial flagellum basal body. Assembles around the rod to form the L-ring and probably protects the motor/basal body from shearing forces during rotation. The protein is Flagellar L-ring protein of Azorhizobium caulinodans (strain ATCC 43989 / DSM 5975 / JCM 20966 / LMG 6465 / NBRC 14845 / NCIMB 13405 / ORS 571).